Here is a 215-residue protein sequence, read N- to C-terminus: Fibrillarin-like rRNA/tRNA 2'-O-methyltransferase (215 aa).

The interval 1–29 is disordered; that stretch reads MKASSSLPDGVQRRQFDNRSRLTTHGTTV. Residues 11 to 20 show a composition bias toward basic and acidic residues; that stretch reads VQRRQFDNRS. S-adenosyl-L-methionine is bound by residues 76 to 77, 92 to 93, 117 to 118, and 138 to 141; these read TT, EF, DA, and DVAT.

It belongs to the methyltransferase superfamily. Fibrillarin family. In terms of assembly, interacts with nop5. Component of box C/D small ribonucleoprotein (sRNP) particles that contain rpl7ae, FlpA and nop5, plus a guide RNA.

Functionally, involved in pre-rRNA and tRNA processing. Utilizes the methyl donor S-adenosyl-L-methionine to catalyze the site-specific 2'-hydroxyl methylation of ribose moieties in rRNA and tRNA. Site specificity is provided by a guide RNA that base pairs with the substrate. Methylation occurs at a characteristic distance from the sequence involved in base pairing with the guide RNA. This Haloquadratum walsbyi (strain DSM 16790 / HBSQ001) protein is Fibrillarin-like rRNA/tRNA 2'-O-methyltransferase.